The chain runs to 500 residues: Keratin, type II cuticular Hb1 (500 aa).

Residues 1–106 (MTCGSGFRGR…PNAQCVKQEE (106 aa)) form a head region. The 312-residue stretch at 106–417 (EKEQIKCLNN…RLLEGEEQRL (312 aa)) folds into the IF rod domain. Residues 107–141 (KEQIKCLNNRFAAFIDKVRFLEQQNKLLETKLQFY) are coil 1A. Residues 142 to 151 (QNRQCCESNL) form a linker 1 region. A coil 1B region spans residues 152–252 (EPLFNGYIET…YEEEIRVLQA (101 aa)). K212 participates in a covalent cross-link: Glycyl lysine isopeptide (Lys-Gly) (interchain with G-Cter in SUMO1). Residues 253–269 (HISDTSVIVKMDNSRDL) form a linker 12 region. Positions 270-413 (NMDNIVAEIK…ATYRRLLEGE (144 aa)) are coil 2. Residues 414–500 (EQRLCEGVGS…GSCASVCRKC (87 aa)) are tail.

This sequence belongs to the intermediate filament family. In terms of assembly, heterotetramer of two type I and two type II keratins.

In Bos taurus (Bovine), this protein is Keratin, type II cuticular Hb1.